A 339-amino-acid polypeptide reads, in one-letter code: MLTRNPIVPENHVSNPIVDYEFNQDQSCLIVSTPKSFDIYNVHPLKRIMSQEMPDAGTIRMLHRTNYIAFVSTKKELLHIWDDVKKQDITRVKLDAAVKDLFLSREFIVVSQGDVISIFKFGNPWNKITEDIKFGGVCEFANGLLVYSNEFNLGQIHVTRLQTDAEQVVGKGVLVKAHANPVKMVRLNRKGDMVATCSQDGTLIRVFQTDNGVLVREFRRGLDRTSIIDMRWSPDGSKLAVVSDKWTLHVFEVFNDAENKRHVLKDWINIKYFQSEWSICNFKLKVSKGSNDCKIAWISDTGLVIVWPNRRLADTFKLNYNDDEHVWWLQLNQRNEIPL.

WD repeat units lie at residues 177 to 217 (AHAN…LVRE) and 222 to 261 (LDRTSIIDMRWSPDGSKLAVVSDKWTLHVFEVFNDAENKR).

Belongs to the WD repeat PROPPIN family.

The protein localises to the vacuole membrane. The protein resides in the cytoplasmic vesicle membrane. In terms of biological role, involved in mitochondrial or peroxisomal functions and amino acid signaling pathways. This is SVP1-like protein 2 (HSV2) from Kluyveromyces lactis (strain ATCC 8585 / CBS 2359 / DSM 70799 / NBRC 1267 / NRRL Y-1140 / WM37) (Yeast).